The following is a 230-amino-acid chain: MMAGHDSGNAKRGRSPSFGVFVRKPVERAPAKGASDGAVDSQAIRIDAAQSWPDDAVEVGAVVDAYGLKGWVKLAAHAGAGRGGDALLKARDWWLQKGAERKFARVTQAKLHGDTVVAHPDGSVDRDTALALRGARVFVRRGDFPALAADEFYWVDLIGLDVVNEAGVALGKIADMIDNGVHSIMRVEYPATGKDGRPKTGERLIPFVGVYVKAVEQAAGRVVVDWEADY.

The region spanning 149–230 (ADEFYWVDLI…RVVVDWEADY (82 aa)) is the PRC barrel domain.

It belongs to the RimM family. In terms of assembly, binds ribosomal protein uS19.

It is found in the cytoplasm. In terms of biological role, an accessory protein needed during the final step in the assembly of 30S ribosomal subunit, possibly for assembly of the head region. Essential for efficient processing of 16S rRNA. May be needed both before and after RbfA during the maturation of 16S rRNA. It has affinity for free ribosomal 30S subunits but not for 70S ribosomes. This Burkholderia mallei (strain NCTC 10229) protein is Ribosome maturation factor RimM.